The sequence spans 484 residues: Regulator of G-protein signaling 9 (484 aa).

The 76-residue stretch at 30 to 105 folds into the DEP domain; that stretch reads PDTGVRVQNQ…PDSSLYRFQT (76 aa). Positions 219–280 constitute a G protein gamma domain; that stretch reads VVSVRKEIMY…ITDDTQFWDL (62 aa). Residues 299-414 form the RGS domain; it reads NFSELIRDPK…LKSPIYKEML (116 aa). Residues 460–484 form a disordered region; it reads TTVDITQVMSKLDRRSQLRKEPPPK. Basic and acidic residues predominate over residues 470–484; the sequence is KLDRRSQLRKEPPPK.

In terms of assembly, heterodimer with GNB5. Interacts with RGS7BP, leading to regulate the subcellular location of the heterodimer formed with GNB5. Component of the RGS9-1-Gbeta5 complex composed of RGS9 (RGS9-1), Gbeta5 (GNB5) and RGS9BP. Interacts with PDE6G and GNAT1. Phosphorylation is decreased by light exposition. In terms of tissue distribution, photoreceptor outer segments.

The protein localises to the membrane. Inhibits signal transduction by increasing the GTPase activity of G protein alpha subunits thereby driving them into their inactive GDP-bound form. Binds to GNAT1. Involved in phototransduction; key element in the recovery phase of visual transduction. This Bos taurus (Bovine) protein is Regulator of G-protein signaling 9 (RGS9).